The sequence spans 154 residues: Superoxide dismutase [Cu-Zn] (154 aa).

Residue Lys19 forms a Glycyl lysine isopeptide (Lys-Gly) (interchain with G-Cter in SUMO) linkage. Ser26 and Ser39 each carry phosphoserine. A Zn(2+)-binding site is contributed by Glu43. Residues His47, His49, and His64 each contribute to the Cu cation site. Cys58 and Cys147 are oxidised to a cystine. His64 serves as a coordination point for Zn(2+). Residue Lys70 forms a Glycyl lysine isopeptide (Lys-Gly) (interchain with G-Cter in SUMO) linkage. The Zn(2+) site is built by His72, His81, and Asp84. Ser99 and Ser117 each carry phosphoserine. His121 contacts Cu cation. A phosphothreonine mark is found at Thr132 and Thr138. Arg144 contributes to the substrate binding site.

The protein belongs to the Cu-Zn superoxide dismutase family. As to quaternary structure, homodimer in holo form. In apo form, heterodimer with CCS1. Zinc-binding at 'His-16' of CCS1 and Glu-43 of apo-SOD1 is required for this heterodimerization. It depends on Cu cation as a cofactor. Requires Zn(2+) as cofactor.

It localises to the cytoplasm. It is found in the mitochondrion intermembrane space. It carries out the reaction 2 superoxide + 2 H(+) = H2O2 + O2. Its function is as follows. Destroys radicals which are normally produced within the cells and which are toxic to biological systems. This is Superoxide dismutase [Cu-Zn] from Saccharomyces cerevisiae (strain ATCC 204508 / S288c) (Baker's yeast).